Reading from the N-terminus, the 442-residue chain is Adenylosuccinate synthetase (442 aa).

Residues 16 to 22 (GDEGKGK) and 44 to 46 (GHT) each bind GTP. Catalysis depends on Asp-17, which acts as the Proton acceptor. Positions 17 and 44 each coordinate Mg(2+). Residues 17–20 (DEGK), 42–45 (NAGH), Thr-133, Arg-147, Gln-228, Thr-243, and Arg-307 contribute to the IMP site. His-45 serves as the catalytic Proton donor. Position 303-309 (303-309 (AVTGRPR)) interacts with substrate. GTP-binding positions include Arg-309, 335 to 337 (KLD), and 417 to 419 (STG).

This sequence belongs to the adenylosuccinate synthetase family. In terms of assembly, homodimer. Mg(2+) serves as cofactor.

Its subcellular location is the cytoplasm. It catalyses the reaction IMP + L-aspartate + GTP = N(6)-(1,2-dicarboxyethyl)-AMP + GDP + phosphate + 2 H(+). Its pathway is purine metabolism; AMP biosynthesis via de novo pathway; AMP from IMP: step 1/2. Plays an important role in the de novo pathway of purine nucleotide biosynthesis. Catalyzes the first committed step in the biosynthesis of AMP from IMP. This chain is Adenylosuccinate synthetase, found in Koribacter versatilis (strain Ellin345).